The chain runs to 294 residues: GTPase Era (294 aa).

The Era-type G domain occupies 4-170; it reads KSGFVSVIGR…VEEIFTFLPE (167 aa). The interval 12–19 is G1; sequence GRPNVGKS. 12-19 contributes to the GTP binding site; sequence GRPNVGKS. Positions 38-42 are G2; that stretch reads QTTRN. Residues 59–62 form a G3 region; that stretch reads DTPG. GTP-binding positions include 59 to 63 and 121 to 124; these read DTPGI and NKID. The G4 stretch occupies residues 121–124; the sequence is NKID. Residues 149 to 151 form a G5 region; the sequence is ISA. In terms of domain architecture, KH type-2 spans 201 to 278; it reads TREEVPYGVA…YLDLWVKIEK (78 aa).

It belongs to the TRAFAC class TrmE-Era-EngA-EngB-Septin-like GTPase superfamily. Era GTPase family. Monomer.

It is found in the cytoplasm. Its subcellular location is the cell inner membrane. Its function is as follows. An essential GTPase that binds both GDP and GTP, with rapid nucleotide exchange. Plays a role in 16S rRNA processing and 30S ribosomal subunit biogenesis and possibly also in cell cycle regulation and energy metabolism. This is GTPase Era from Halothermothrix orenii (strain H 168 / OCM 544 / DSM 9562).